The sequence spans 144 residues: Fluoride-specific ion channel FluC (144 aa).

4 helical membrane-spanning segments follow: residues 7–27 (LIVMVGGALGTLARYLVSVAA), 33–53 (FIPWGTILPINALGSFVIGFF), 71–91 (LFVMIGLCGGYTTFSSFSLQT), and 105–125 (VNVAASVILCIGAVALGHITA). Glycine 79 and threonine 82 together coordinate Na(+).

The protein belongs to the fluoride channel Fluc/FEX (TC 1.A.43) family.

It localises to the cell inner membrane. The catalysed reaction is fluoride(in) = fluoride(out). Its activity is regulated as follows. Na(+) is not transported, but it plays an essential structural role and its presence is essential for fluoride channel function. Its function is as follows. Fluoride-specific ion channel. Important for reducing fluoride concentration in the cell, thus reducing its toxicity. The chain is Fluoride-specific ion channel FluC from Gluconobacter oxydans (strain 621H) (Gluconobacter suboxydans).